Here is a 447-residue protein sequence, read N- to C-terminus: ATP-dependent protease ATPase subunit HslU (447 aa).

ATP-binding positions include I18, 60–65 (GVGKTE), D259, E325, and R397.

This sequence belongs to the ClpX chaperone family. HslU subfamily. As to quaternary structure, a double ring-shaped homohexamer of HslV is capped on each side by a ring-shaped HslU homohexamer. The assembly of the HslU/HslV complex is dependent on binding of ATP.

It localises to the cytoplasm. Its function is as follows. ATPase subunit of a proteasome-like degradation complex; this subunit has chaperone activity. The binding of ATP and its subsequent hydrolysis by HslU are essential for unfolding of protein substrates subsequently hydrolyzed by HslV. HslU recognizes the N-terminal part of its protein substrates and unfolds these before they are guided to HslV for hydrolysis. In Burkholderia cenocepacia (strain ATCC BAA-245 / DSM 16553 / LMG 16656 / NCTC 13227 / J2315 / CF5610) (Burkholderia cepacia (strain J2315)), this protein is ATP-dependent protease ATPase subunit HslU.